We begin with the raw amino-acid sequence, 180 residues long: MIVYLHGFDSNSPGNHEKVLQLQFIDPDVRFISYSTLHPRHDMQYLLKEVDKAIQQGGDEKSLICGVGLGGFWAERIGFLCGIRQVAFNPNLYPQENMSGKIDRPEEYIDIASKCIDGFREKNRDRCLVVLSRHDEMLDSQRTAGDLHPYYEIVWDDKQNHKFKDLSPHLQRIKAFKTLG.

It belongs to the UPF0227 family.

The chain is UPF0227 protein YpsIP31758_1593 from Yersinia pseudotuberculosis serotype O:1b (strain IP 31758).